Reading from the N-terminus, the 249-residue chain is Undecaprenyl-diphosphatase (249 aa).

8 consecutive transmembrane segments (helical) span residues 11 to 31 (GLTE…TAIF), 35 to 55 (PDVG…LIFV), 80 to 100 (LVLS…FIES), 101 to 121 (VFSS…LMLL), 135 to 155 (IPYF…LPGI), 180 to 200 (FLMS…NVAF), 202 to 222 (TEQI…LYLV), and 226 to 246 (VIGG…FFVL).

The protein belongs to the UppP family.

The protein resides in the cell membrane. It catalyses the reaction di-trans,octa-cis-undecaprenyl diphosphate + H2O = di-trans,octa-cis-undecaprenyl phosphate + phosphate + H(+). In terms of biological role, catalyzes the dephosphorylation of undecaprenyl diphosphate (UPP). In Methanococcus maripaludis (strain C7 / ATCC BAA-1331), this protein is Undecaprenyl-diphosphatase.